A 227-amino-acid polypeptide reads, in one-letter code: UPF0758 protein Rxyl_1530 (227 aa).

One can recognise an MPN domain in the interval 106 to 227 (VISSPADVDG…YFSMKEHGML (122 aa)). The Zn(2+) site is built by His-177, His-179, and Asp-190. Residues 177 to 190 (HNHPSGRVEPSRED) carry the JAMM motif motif.

The protein belongs to the UPF0758 family.

The chain is UPF0758 protein Rxyl_1530 from Rubrobacter xylanophilus (strain DSM 9941 / JCM 11954 / NBRC 16129 / PRD-1).